An 81-amino-acid polypeptide reads, in one-letter code: Neuronatin (81 aa).

The protein belongs to the neuronatin family.

May participate in the maintenance of segment identity in the hindbrain and pituitary development, and maturation or maintenance of the overall structure of the nervous system. May function as a regulatory subunit of ion channels. This chain is Neuronatin (NNAT), found in Sus scrofa (Pig).